Consider the following 165-residue polypeptide: Heme oxygenase (165 aa).

It belongs to the heme oxygenase family.

The catalysed reaction is heme b + 3 reduced [NADPH--hemoprotein reductase] + 3 O2 = biliverdin IXalpha + CO + Fe(2+) + 3 oxidized [NADPH--hemoprotein reductase] + 3 H2O + H(+). In terms of biological role, catalyzes the opening of the heme ring to form the open-chain tetrapyrrole biliverdin IX with the release of iron and carbon monoxide (CO). The protein is Heme oxygenase (bphO) of Xanthomonas campestris pv. campestris (strain 8004).